The primary structure comprises 719 residues: Translation initiation factor IF-2 (719 aa).

A compositionally biased stretch (basic and acidic residues) spans 54–67; the sequence is NKEETKPNVDEKPP. 2 disordered regions span residues 54-75 and 97-122; these read NKEE…LTDN and STKN…KRKN. Residues 109–122 show a composition bias toward basic residues; that stretch reads KDKKKKNKKDKRKN. The tr-type G domain maps to 221–390; it reads HRSPVVTVMG…LLVSEMSELK (170 aa). Residues 230–237 are G1; the sequence is GHVDHGKT. Residue 230-237 coordinates GTP; the sequence is GHVDHGKT. Positions 255–259 are G2; that stretch reads GITQH. Positions 276–279 are G3; the sequence is DTPG. GTP is bound by residues 276 to 280 and 330 to 333; these read DTPGH and NKMD. Residues 330 to 333 are G4; it reads NKMD. The segment at 366–368 is G5; it reads SAR.

The protein belongs to the TRAFAC class translation factor GTPase superfamily. Classic translation factor GTPase family. IF-2 subfamily.

It localises to the cytoplasm. In terms of biological role, one of the essential components for the initiation of protein synthesis. Protects formylmethionyl-tRNA from spontaneous hydrolysis and promotes its binding to the 30S ribosomal subunits. Also involved in the hydrolysis of GTP during the formation of the 70S ribosomal complex. In Alkaliphilus oremlandii (strain OhILAs) (Clostridium oremlandii (strain OhILAs)), this protein is Translation initiation factor IF-2.